The following is a 392-amino-acid chain: Ribosomal RNA large subunit methyltransferase G (392 aa).

Belongs to the methyltransferase superfamily. RlmG family.

The protein localises to the cytoplasm. It catalyses the reaction guanosine(1835) in 23S rRNA + S-adenosyl-L-methionine = N(2)-methylguanosine(1835) in 23S rRNA + S-adenosyl-L-homocysteine + H(+). Functionally, specifically methylates the guanine in position 1835 (m2G1835) of 23S rRNA. This is Ribosomal RNA large subunit methyltransferase G from Colwellia psychrerythraea (strain 34H / ATCC BAA-681) (Vibrio psychroerythus).